Consider the following 591-residue polypeptide: L-fucose isomerase (591 aa).

Catalysis depends on proton acceptor residues E337 and D361. E337, D361, and H528 together coordinate Mn(2+).

The protein belongs to the L-fucose isomerase family. Homohexamer. Requires Mn(2+) as cofactor.

The protein localises to the cytoplasm. It carries out the reaction L-fucose = L-fuculose. It participates in carbohydrate degradation; L-fucose degradation; L-lactaldehyde and glycerone phosphate from L-fucose: step 1/3. In terms of biological role, converts the aldose L-fucose into the corresponding ketose L-fuculose. In Salmonella paratyphi B (strain ATCC BAA-1250 / SPB7), this protein is L-fucose isomerase.